The sequence spans 333 residues: Chlorophyllide reductase 35.5 kDa chain (333 aa).

A disordered region spans residues 1-22 (MTDAPNLKGFDARLREEAAEEP). ATP-binding positions include 45-50 (GSGKSF) and K74. S49 is a binding site for Mg(2+). [4Fe-4S] cluster contacts are provided by C130 and C165. 219-220 (NK) is an ATP binding site.

The protein belongs to the NifH/BchL/ChlL family. As to quaternary structure, homodimer. Chlorophyllide reductase is composed of three subunits; BchX, BchY and BchZ. [4Fe-4S] cluster serves as cofactor.

The catalysed reaction is 3-deacetyl-3-vinylbacteriochlorophyllide a + 2 oxidized [2Fe-2S]-[ferredoxin] + ADP + phosphate = chlorophyllide a + 2 reduced [2Fe-2S]-[ferredoxin] + ATP + H2O + H(+). It carries out the reaction bacteriochlorophyllide a + 2 oxidized [2Fe-2S]-[ferredoxin] + ADP + phosphate = 3-acetyl-3-devinylchlorophyllide a + 2 reduced [2Fe-2S]-[ferredoxin] + ATP + H2O + H(+). It catalyses the reaction 3-deacetyl-3-(1-hydroxyethyl)bacteriochlorophyllide a + 2 oxidized [2Fe-2S]-[ferredoxin] + ADP + phosphate = 3-devinyl-3-(1-hydroxyethyl)chlorophyllide a + 2 reduced [2Fe-2S]-[ferredoxin] + ATP + H2O + H(+). The protein operates within porphyrin-containing compound metabolism; bacteriochlorophyll biosynthesis. In terms of biological role, converts chlorophylls (Chl) into bacteriochlorophylls (BChl) by reducing ring B of the tetrapyrrole. The sequence is that of Chlorophyllide reductase 35.5 kDa chain (bchX) from Rhodobacter capsulatus (strain ATCC BAA-309 / NBRC 16581 / SB1003).